A 201-amino-acid polypeptide reads, in one-letter code: Ribonuclease HII (201 aa).

The 191-residue stretch at 11-201 folds into the RNase H type-2 domain; sequence LRECGCDEAG…VVDADRPTTE (191 aa). Positions 17, 18, and 109 each coordinate a divalent metal cation.

Belongs to the RNase HII family. The cofactor is Mn(2+). It depends on Mg(2+) as a cofactor.

The protein resides in the cytoplasm. The catalysed reaction is Endonucleolytic cleavage to 5'-phosphomonoester.. Endonuclease that specifically degrades the RNA of RNA-DNA hybrids. In Porphyromonas gingivalis (strain ATCC BAA-308 / W83), this protein is Ribonuclease HII (rnhB).